The primary structure comprises 147 residues: Elongation factor Tu (147 aa).

It belongs to the GTP-binding elongation factor family. EF-Tu/EF-1A subfamily. Monomer.

The protein resides in the cytoplasm. This protein promotes the GTP-dependent binding of aminoacyl-tRNA to the A-site of ribosomes during protein biosynthesis. The polypeptide is Elongation factor Tu (tuf) (Fructilactobacillus sanfranciscensis (Lactobacillus sanfranciscensis)).